The primary structure comprises 445 residues: Probable D-serine dehydratase (445 aa).

Lysine 111 is modified (N6-(pyridoxal phosphate)lysine).

Belongs to the serine/threonine dehydratase family. DsdA subfamily. Requires pyridoxal 5'-phosphate as cofactor.

It carries out the reaction D-serine = pyruvate + NH4(+). In Burkholderia pseudomallei (strain 668), this protein is Probable D-serine dehydratase.